We begin with the raw amino-acid sequence, 496 residues long: Glycerol kinase (496 aa).

Threonine 12 provides a ligand contact to ADP. Residues threonine 12, threonine 13, and serine 14 each contribute to the ATP site. Residue threonine 12 coordinates sn-glycerol 3-phosphate. ADP is bound at residue arginine 16. Sn-glycerol 3-phosphate-binding residues include arginine 82, glutamate 83, and tyrosine 134. Glycerol-binding residues include arginine 82, glutamate 83, and tyrosine 134. Histidine 230 carries the post-translational modification Phosphohistidine; by HPr. Aspartate 244 contacts sn-glycerol 3-phosphate. Aspartate 244 and glutamine 245 together coordinate glycerol. Positions 266 and 309 each coordinate ADP. Positions 266, 309, 313, and 410 each coordinate ATP. Glycine 410 and asparagine 414 together coordinate ADP.

Belongs to the FGGY kinase family. Homotetramer and homodimer (in equilibrium). In terms of processing, the phosphoenolpyruvate-dependent sugar phosphotransferase system (PTS), including enzyme I, and histidine-containing protein (HPr) are required for the phosphorylation, which leads to the activation of the enzyme.

The enzyme catalyses glycerol + ATP = sn-glycerol 3-phosphate + ADP + H(+). The protein operates within polyol metabolism; glycerol degradation via glycerol kinase pathway; sn-glycerol 3-phosphate from glycerol: step 1/1. Activated by phosphorylation and inhibited by fructose 1,6-bisphosphate (FBP). Functionally, key enzyme in the regulation of glycerol uptake and metabolism. Catalyzes the phosphorylation of glycerol to yield sn-glycerol 3-phosphate. The chain is Glycerol kinase from Bacillus thuringiensis subsp. konkukian (strain 97-27).